The following is a 260-amino-acid chain: Flap endonuclease Xni (260 aa).

Aspartate 105 provides a ligand contact to Mg(2+). In terms of domain architecture, 5'-3' exonuclease spans 164–259 (NQFLDLMALA…VNGPANTQQA (96 aa)). Residues leucine 172, alanine 173, proline 181, isoleucine 183, and isoleucine 186 each contribute to the K(+) site. The tract at residues 185-190 (GIGPKS) is interaction with DNA.

It belongs to the Xni family. Mg(2+) is required as a cofactor. It depends on K(+) as a cofactor.

Has flap endonuclease activity. During DNA replication, flap endonucleases cleave the 5'-overhanging flap structure that is generated by displacement synthesis when DNA polymerase encounters the 5'-end of a downstream Okazaki fragment. In Shewanella sp. (strain MR-4), this protein is Flap endonuclease Xni.